A 282-amino-acid polypeptide reads, in one-letter code: Bis(5'-nucleosyl)-tetraphosphatase, symmetrical (282 aa).

This sequence belongs to the Ap4A hydrolase family.

The enzyme catalyses P(1),P(4)-bis(5'-adenosyl) tetraphosphate + H2O = 2 ADP + 2 H(+). Hydrolyzes diadenosine 5',5'''-P1,P4-tetraphosphate to yield ADP. In Sodalis glossinidius (strain morsitans), this protein is Bis(5'-nucleosyl)-tetraphosphatase, symmetrical.